Reading from the N-terminus, the 309-residue chain is MLRSLLQSGHRRVVASSCATMVRCSSSSTSALAYKQMHRHATRPPLPTLDTPSWNANSAVSSIIYETPAPSRQPRKQHVLNCLVQNEPGVLSRVSGTLAARGFNIDSLVVCNTEVKDLSRMTIVLQGQDGVVEQARRQIEDLVPVYAVLDYTNSEIIKRELVMARISLLGTEYFEDLLLHHHTSTNAGAADSQELVAEIREKQFHPANLPASEVLRLKHEHLNDITNLTNNFGGRVVDISETSCIVELSAKPTRISAFLKLVEPFGVLECARSGMMALPRTPLKTSTEEAADEDEKISEIVDISQLPPG.

The N-terminal 24 residues, 1 to 24 (MLRSLLQSGHRRVVASSCATMVRC), are a transit peptide targeting the mitochondrion. Residues 79-159 (VLNCLVQNEP…DYTNSEIIKR (81 aa)) form the ACT domain.

Belongs to the acetolactate synthase small subunit family. As to quaternary structure, the acetolactate synthase complex contains the catalytic regulatory subunit ILV2 and the regulatory small subunit ILV6.

The protein resides in the mitochondrion. It functions in the pathway amino-acid biosynthesis; L-isoleucine biosynthesis; L-isoleucine from 2-oxobutanoate: step 1/4. The protein operates within amino-acid biosynthesis; L-valine biosynthesis; L-valine from pyruvate: step 1/4. Regulatory subunit of mitochondrial acetolactate synthase, which catalyzes the first of a series of common steps in the biosynthesis of the branched-chain amino acids. Stimulates activity of the acetolactate synthase catalytic subunit ILV2 seven- to tenfold and confers sensitivity to inhibition by valine and activation by ATP. The polypeptide is Acetolactate synthase small subunit, mitochondrial (ILV6) (Saccharomyces cerevisiae (strain ATCC 204508 / S288c) (Baker's yeast)).